Here is a 154-residue protein sequence, read N- to C-terminus: Ribonuclease H (154 aa).

The RNase H type-1 domain occupies 1 to 142 (MLKQVEIFTD…CDELARRAAG (142 aa)). Mg(2+) contacts are provided by D10, E48, D70, and D134.

This sequence belongs to the RNase H family. As to quaternary structure, monomer. It depends on Mg(2+) as a cofactor.

The protein resides in the cytoplasm. The catalysed reaction is Endonucleolytic cleavage to 5'-phosphomonoester.. Functionally, endonuclease that specifically degrades the RNA of RNA-DNA hybrids. This chain is Ribonuclease H, found in Edwardsiella ictaluri (strain 93-146).